The chain runs to 352 residues: Trifunctional sesterterpene/triterpene/sesquarterpene synthase (352 aa).

The protein belongs to the large terpene synthase family.

It carries out the reaction (2E,6E,10E,14E)-geranylfarnesyl diphosphate = beta-geranylfarnesene + diphosphate. The catalysed reaction is all-trans-hexaprenyl diphosphate = beta-hexaprene + diphosphate. The enzyme catalyses all-trans-heptaprenyl diphosphate = beta-heptaprene + diphosphate. Functionally, catalyzes the conversion of geranylfarnesyl diphosphate (GFPP) and hexaprenyl diphosphate (HexPP) into beta-geranylfarnesene and beta-hexaprene, respectively. Also produces beta-heptaprene from heptaprenyl diphosphate (HepPP) as a minor product. The polypeptide is Trifunctional sesterterpene/triterpene/sesquarterpene synthase (Shouchella clausii (Alkalihalobacillus clausii)).